Reading from the N-terminus, the 364-residue chain is tRNA 2-selenouridine synthase (364 aa).

The 124-residue stretch at 14–137 folds into the Rhodanese domain; the sequence is LIADTPIIDV…LRQTTIQATI (124 aa). Cys-97 acts as the S-selanylcysteine intermediate in catalysis.

Belongs to the SelU family. In terms of assembly, monomer.

It catalyses the reaction 5-methylaminomethyl-2-thiouridine(34) in tRNA + selenophosphate + (2E)-geranyl diphosphate + H2O + H(+) = 5-methylaminomethyl-2-selenouridine(34) in tRNA + (2E)-thiogeraniol + phosphate + diphosphate. The catalysed reaction is 5-methylaminomethyl-2-thiouridine(34) in tRNA + (2E)-geranyl diphosphate = 5-methylaminomethyl-S-(2E)-geranyl-thiouridine(34) in tRNA + diphosphate. It carries out the reaction 5-methylaminomethyl-S-(2E)-geranyl-thiouridine(34) in tRNA + selenophosphate + H(+) = 5-methylaminomethyl-2-(Se-phospho)selenouridine(34) in tRNA + (2E)-thiogeraniol. The enzyme catalyses 5-methylaminomethyl-2-(Se-phospho)selenouridine(34) in tRNA + H2O = 5-methylaminomethyl-2-selenouridine(34) in tRNA + phosphate. Its function is as follows. Involved in the post-transcriptional modification of the uridine at the wobble position (U34) of tRNA(Lys), tRNA(Glu) and tRNA(Gln). Catalyzes the conversion of 2-thiouridine (S2U-RNA) to 2-selenouridine (Se2U-RNA). Acts in a two-step process involving geranylation of 2-thiouridine (S2U) to S-geranyl-2-thiouridine (geS2U) and subsequent selenation of the latter derivative to 2-selenouridine (Se2U) in the tRNA chain. This Escherichia coli O8 (strain IAI1) protein is tRNA 2-selenouridine synthase.